The following is a 463-amino-acid chain: Mitochondrial dynamics protein MID51 (463 aa).

At 1-23 (MAGAGERKGKKDDNGIGTAIDFV) the chain is on the mitochondrial intermembrane side. The chain crosses the membrane as a helical span at residues 24–46 (LSNARLVLGVGGAAMLGIATLAV). The Cytoplasmic portion of the chain corresponds to 47 to 463 (KRMYDRAISA…LSEPEVLLQT (417 aa)). The interval 49–195 (MYDRAISAPT…LSGSLYDDLQ (147 aa)) is dimerization. Residues serine 55, serine 59, serine 79, and serine 94 each carry the phosphoserine modification. The segment at 57-79 (PTSPTRLSHSGKRSWEEPNWMGS) is disordered. A disordered region spans residues 104-123 (AFDTDTFCPPRPKPVARKGQ). An important for interaction with DNM1L region spans residues 160 to 169 (AAVDICAELR). ADP-binding residues include serine 187, serine 189, and histidine 201. The interval 234-243 (RRENPEYFPR) is important for interaction with DNM1L. 3 residues coordinate ADP: serine 340, arginine 342, and lysine 368.

Belongs to the MID49/MID51 family. In terms of assembly, homodimer. Interacts with DNM1L.

It localises to the mitochondrion outer membrane. Mitochondrial outer membrane protein which regulates mitochondrial fission/fusion dynamics. Promotes the recruitment and association of the fission mediator dynamin-related protein 1 (DNM1L) to the mitochondrial surface independently of the mitochondrial fission FIS1 and MFF proteins. Regulates DNM1L GTPase activity and DNM1L oligomerization. Binds ADP and can also bind GDP, although with lower affinity. Does not bind CDP, UDP, ATP, AMP or GTP. Inhibits DNM1L GTPase activity in the absence of bound ADP. Requires ADP to stimulate DNM1L GTPase activity and the assembly of DNM1L into long, oligomeric tubules with a spiral pattern, as opposed to the ring-like DNM1L oligomers observed in the absence of bound ADP. Does not require ADP for its function in recruiting DNM1L. This Pongo abelii (Sumatran orangutan) protein is Mitochondrial dynamics protein MID51 (MIEF1).